A 192-amino-acid chain; its full sequence is UPF0301 protein BTH_I1462 (192 aa).

It belongs to the UPF0301 (AlgH) family.

The chain is UPF0301 protein BTH_I1462 from Burkholderia thailandensis (strain ATCC 700388 / DSM 13276 / CCUG 48851 / CIP 106301 / E264).